A 413-amino-acid chain; its full sequence is Gamma-glutamyl phosphate reductase (413 aa).

The protein belongs to the gamma-glutamyl phosphate reductase family.

Its subcellular location is the cytoplasm. The enzyme catalyses L-glutamate 5-semialdehyde + phosphate + NADP(+) = L-glutamyl 5-phosphate + NADPH + H(+). The protein operates within amino-acid biosynthesis; L-proline biosynthesis; L-glutamate 5-semialdehyde from L-glutamate: step 2/2. In terms of biological role, catalyzes the NADPH-dependent reduction of L-glutamate 5-phosphate into L-glutamate 5-semialdehyde and phosphate. The product spontaneously undergoes cyclization to form 1-pyrroline-5-carboxylate. The polypeptide is Gamma-glutamyl phosphate reductase (Lactococcus lactis subsp. lactis (strain IL1403) (Streptococcus lactis)).